The primary structure comprises 186 residues: Phosphoheptose isomerase 1 (186 aa).

The 154-residue stretch at 33-186 (LCECLKKGGK…TLCQIIDESF (154 aa)) folds into the SIS domain. 48 to 50 (NGG) is a binding site for substrate. Residues histidine 57 and glutamate 61 each contribute to the Zn(2+) site. Residues glutamate 61, 90–91 (ND), 116–118 (STS), serine 121, and glutamine 168 each bind substrate. 2 residues coordinate Zn(2+): glutamine 168 and histidine 176.

It belongs to the SIS family. GmhA subfamily. As to quaternary structure, homotetramer. Zn(2+) is required as a cofactor.

Its subcellular location is the cytoplasm. The catalysed reaction is 2 D-sedoheptulose 7-phosphate = D-glycero-alpha-D-manno-heptose 7-phosphate + D-glycero-beta-D-manno-heptose 7-phosphate. It participates in carbohydrate biosynthesis; D-glycero-D-manno-heptose 7-phosphate biosynthesis; D-glycero-alpha-D-manno-heptose 7-phosphate and D-glycero-beta-D-manno-heptose 7-phosphate from sedoheptulose 7-phosphate: step 1/1. Its pathway is bacterial outer membrane biogenesis; LOS core biosynthesis. Functionally, catalyzes the isomerization of sedoheptulose 7-phosphate in D-glycero-D-manno-heptose 7-phosphate. In Campylobacter jejuni subsp. jejuni serotype O:2 (strain ATCC 700819 / NCTC 11168), this protein is Phosphoheptose isomerase 1 (gmhA1).